A 215-amino-acid polypeptide reads, in one-letter code: Protein FAM27D1 (215 aa).

Positions 74 to 172 (QPKTHTHTGM…RGTQADLSSR (99 aa)) are disordered. Over residues 87–108 (THRERERNTQRLRDRERRENGR) the composition is skewed to basic and acidic residues. Residues 109–122 (HTHRHTHTLTHTHT) are compositionally biased toward basic residues. Composition is skewed to basic and acidic residues over residues 123 to 139 (HRDTHTASYRRGIETHT) and 149 to 162 (SAHDENDPRVREQP). Over residues 163 to 172 (RGTQADLSSR) the composition is skewed to polar residues.

The protein belongs to the FAM27 family.

This chain is Protein FAM27D1 (FAM27D1), found in Homo sapiens (Human).